Consider the following 211-residue polypeptide: Interleukin-6 (211 aa).

An N-terminal signal peptide occupies residues 1-25 (MNSLSTSTFSPVAFSLGLLLVMATA). An intrachain disulfide couples cysteine 71 to cysteine 77. Serine 80 is subject to Phosphoserine. The cysteines at positions 100 and 110 are disulfide-linked.

Belongs to the IL-6 superfamily. In terms of assembly, component of a hexamer of two molecules each of IL6, IL6R and IL6ST; first binds to IL6R to associate with the signaling subunit IL6ST. Interacts with IL6R (via the N-terminal ectodomain); this interaction may be affected by IL6R-binding with SORL1, hence decreasing IL6 cis signaling. Interacts with SORL1 (via the N-terminal ectodomain); this interaction leads to IL6 internalization and lysosomal degradation. May form a trimeric complex with the soluble SORL1 ectodomain and soluble IL6R receptor; this interaction might stabilize circulating IL6, hence promoting IL6 trans signaling.

The protein localises to the secreted. Its function is as follows. Cytokine with a wide variety of biological functions in immunity, tissue regeneration, and metabolism. Binds to IL6R, then the complex associates to the signaling subunit IL6ST/gp130 to trigger the intracellular IL6-signaling pathway. The interaction with the membrane-bound IL6R and IL6ST stimulates 'classic signaling', whereas the binding of IL6 and soluble IL6R to IL6ST stimulates 'trans-signaling'. Alternatively, 'cluster signaling' occurs when membrane-bound IL6:IL6R complexes on transmitter cells activate IL6ST receptors on neighboring receiver cells. Functionally, IL6 is a potent inducer of the acute phase response. Rapid production of IL6 contributes to host defense during infection and tissue injury, but excessive IL6 synthesis is involved in disease pathology. In the innate immune response, is synthesized by myeloid cells, such as macrophages and dendritic cells, upon recognition of pathogens through toll-like receptors (TLRs) at the site of infection or tissue injury. In the adaptive immune response, is required for the differentiation of B cells into immunoglobulin-secreting cells. Plays a major role in the differentiation of CD4(+) T cell subsets. Essential factor for the development of T follicular helper (Tfh) cells that are required for the induction of germinal-center formation. Required to drive naive CD4(+) T cells to the Th17 lineage. Also required for proliferation of myeloma cells and the survival of plasmablast cells. Acts as an essential factor in bone homeostasis and on vessels directly or indirectly by induction of VEGF, resulting in increased angiogenesis activity and vascular permeability. Induces, through 'trans-signaling' and synergistically with IL1B and TNF, the production of VEGF. Involved in metabolic controls, is discharged into the bloodstream after muscle contraction increasing lipolysis and improving insulin resistance. 'Trans-signaling' in central nervous system also regulates energy and glucose homeostasis. Mediates, through GLP-1, crosstalk between insulin-sensitive tissues, intestinal L cells and pancreatic islets to adapt to changes in insulin demand. Also acts as a myokine. Plays a protective role during liver injury, being required for maintenance of tissue regeneration. Also has a pivotal role in iron metabolism by regulating HAMP/hepcidin expression upon inflammation or bacterial infection. Through activation of IL6ST-YAP-NOTCH pathway, induces inflammation-induced epithelial regeneration. The polypeptide is Interleukin-6 (IL6) (Lama glama (Llama)).